The sequence spans 100 residues: Small ribosomal subunit protein uS14 (100 aa).

This sequence belongs to the universal ribosomal protein uS14 family. Part of the 30S ribosomal subunit. Contacts proteins S3 and S10.

Functionally, binds 16S rRNA, required for the assembly of 30S particles and may also be responsible for determining the conformation of the 16S rRNA at the A site. This Prochlorococcus marinus (strain NATL2A) protein is Small ribosomal subunit protein uS14.